We begin with the raw amino-acid sequence, 570 residues long: Protein FAM227A (570 aa).

A compositionally biased stretch (basic and acidic residues) spans 87-99 (LREKTRSSPEDKV). Disordered stretches follow at residues 87-112 (LREKTRSSPEDKVKRQRKSQYSCKGS), 336-374 (PAQSRKFYHPQSSSANSPSEKTSSAKQNSEKSLRMQNTA), and 519-570 (KAAD…TSKP). At Y343 the chain carries Phosphotyrosine. The segment covering 345–362 (PQSSSANSPSEKTSSAKQ) has biased composition (polar residues). A phosphoserine mark is found at S348 and S349. Basic and acidic residues-rich tracts occupy residues 363-374 (NSEKSLRMQNTA) and 540-562 (SPDKKTKEGKGGEGKRRETEVEH).

The protein belongs to the FAM227 family.

This chain is Protein FAM227A (FAM227A), found in Homo sapiens (Human).